The primary structure comprises 67 residues: DNA-directed RNA polymerase subunit omega (67 aa).

Belongs to the RNA polymerase subunit omega family. In terms of assembly, the RNAP catalytic core consists of 2 alpha, 1 beta, 1 beta' and 1 omega subunit. When a sigma factor is associated with the core the holoenzyme is formed, which can initiate transcription.

It catalyses the reaction RNA(n) + a ribonucleoside 5'-triphosphate = RNA(n+1) + diphosphate. In terms of biological role, promotes RNA polymerase assembly. Latches the N- and C-terminal regions of the beta' subunit thereby facilitating its interaction with the beta and alpha subunits. This Burkholderia ambifaria (strain ATCC BAA-244 / DSM 16087 / CCUG 44356 / LMG 19182 / AMMD) (Burkholderia cepacia (strain AMMD)) protein is DNA-directed RNA polymerase subunit omega.